We begin with the raw amino-acid sequence, 312 residues long: Malate dehydrogenase (312 aa).

Residues 7 to 13 (GAAGGIG) and Asp-34 contribute to the NAD(+) site. Residues Arg-81 and Arg-87 each coordinate substrate. Residues Asn-94 and 117 to 119 (ITN) each bind NAD(+). 2 residues coordinate substrate: Asn-119 and Arg-153. Catalysis depends on His-177, which acts as the Proton acceptor. Residue Met-227 coordinates NAD(+).

It belongs to the LDH/MDH superfamily. MDH type 1 family. As to quaternary structure, homodimer.

It carries out the reaction (S)-malate + NAD(+) = oxaloacetate + NADH + H(+). Catalyzes the reversible oxidation of malate to oxaloacetate. The sequence is that of Malate dehydrogenase from Salmonella choleraesuis (strain SC-B67).